The sequence spans 420 residues: Glutamyl-tRNA reductase (420 aa).

Substrate contacts are provided by residues 49-52, serine 109, 114-116, and glutamine 120; these read TCNR and EPQ. Catalysis depends on cysteine 50, which acts as the Nucleophile. 189 to 194 serves as a coordination point for NADP(+); that stretch reads GAGETI.

The protein belongs to the glutamyl-tRNA reductase family. Homodimer.

It catalyses the reaction (S)-4-amino-5-oxopentanoate + tRNA(Glu) + NADP(+) = L-glutamyl-tRNA(Glu) + NADPH + H(+). The protein operates within porphyrin-containing compound metabolism; protoporphyrin-IX biosynthesis; 5-aminolevulinate from L-glutamyl-tRNA(Glu): step 1/2. Functionally, catalyzes the NADPH-dependent reduction of glutamyl-tRNA(Glu) to glutamate 1-semialdehyde (GSA). This Yersinia pseudotuberculosis serotype O:1b (strain IP 31758) protein is Glutamyl-tRNA reductase.